A 249-amino-acid polypeptide reads, in one-letter code: uncharacterized protein (249 aa).

The S4 RNA-binding domain occupies 7-64; it reads PRVHVFLAEKGVGSRRFCEELIRKKLVRVNNTIAKLGDKVTLGDRIIYKKQIFVFKDF. Catalysis depends on Asp112, which acts as the Nucleophile.

This sequence belongs to the pseudouridine synthase RsuA family.

It catalyses the reaction a uridine in RNA = a pseudouridine in RNA. This is an uncharacterized protein from Borreliella burgdorferi (strain ATCC 35210 / DSM 4680 / CIP 102532 / B31) (Borrelia burgdorferi).